A 236-amino-acid polypeptide reads, in one-letter code: Small ribosomal subunit protein uS2c (236 aa).

Belongs to the universal ribosomal protein uS2 family.

It is found in the plastid. Its subcellular location is the chloroplast. This Zea mays (Maize) protein is Small ribosomal subunit protein uS2c (rps2).